A 296-amino-acid polypeptide reads, in one-letter code: Phosphatidylglycerol--prolipoprotein diacylglyceryl transferase (296 aa).

3 consecutive transmembrane segments (helical) span residues 17–37 (LAVR…IVVG), 59–79 (MMFY…VLFY), and 97–117 (GGMS…LFAW). A 1,2-diacyl-sn-glycero-3-phospho-(1'-sn-glycerol) is bound at residue R142. The next 2 helical transmembrane spans lie at 230 to 250 (MGAV…TVEF) and 257 to 277 (FLGL…PMIL).

The protein belongs to the Lgt family.

Its subcellular location is the cell inner membrane. It catalyses the reaction L-cysteinyl-[prolipoprotein] + a 1,2-diacyl-sn-glycero-3-phospho-(1'-sn-glycerol) = an S-1,2-diacyl-sn-glyceryl-L-cysteinyl-[prolipoprotein] + sn-glycerol 1-phosphate + H(+). The protein operates within protein modification; lipoprotein biosynthesis (diacylglyceryl transfer). Catalyzes the transfer of the diacylglyceryl group from phosphatidylglycerol to the sulfhydryl group of the N-terminal cysteine of a prolipoprotein, the first step in the formation of mature lipoproteins. In Burkholderia lata (strain ATCC 17760 / DSM 23089 / LMG 22485 / NCIMB 9086 / R18194 / 383), this protein is Phosphatidylglycerol--prolipoprotein diacylglyceryl transferase.